The primary structure comprises 254 residues: 3-deoxy-manno-octulosonate cytidylyltransferase (254 aa).

The protein belongs to the KdsB family.

The protein localises to the cytoplasm. The catalysed reaction is 3-deoxy-alpha-D-manno-oct-2-ulosonate + CTP = CMP-3-deoxy-beta-D-manno-octulosonate + diphosphate. It functions in the pathway nucleotide-sugar biosynthesis; CMP-3-deoxy-D-manno-octulosonate biosynthesis; CMP-3-deoxy-D-manno-octulosonate from 3-deoxy-D-manno-octulosonate and CTP: step 1/1. Its pathway is bacterial outer membrane biogenesis; lipopolysaccharide biosynthesis. In terms of biological role, activates KDO (a required 8-carbon sugar) for incorporation into bacterial lipopolysaccharide in Gram-negative bacteria. The protein is 3-deoxy-manno-octulosonate cytidylyltransferase of Porphyromonas gingivalis (strain ATCC BAA-308 / W83).